The primary structure comprises 231 residues: Large ribosomal subunit protein uL1 (231 aa).

Belongs to the universal ribosomal protein uL1 family. In terms of assembly, part of the 50S ribosomal subunit.

Its function is as follows. Binds directly to 23S rRNA. The L1 stalk is quite mobile in the ribosome, and is involved in E site tRNA release. In terms of biological role, protein L1 is also a translational repressor protein, it controls the translation of the L11 operon by binding to its mRNA. The chain is Large ribosomal subunit protein uL1 from Pseudomonas putida (strain ATCC 700007 / DSM 6899 / JCM 31910 / BCRC 17059 / LMG 24140 / F1).